The following is a 55-amino-acid chain: MASSTDVRPKITLACEVCKHRNYITKKNRRNDPDRLELKKYCPNCGKHQAHRETR.

This sequence belongs to the bacterial ribosomal protein bL33 family.

In Mycolicibacterium paratuberculosis (strain ATCC BAA-968 / K-10) (Mycobacterium paratuberculosis), this protein is Large ribosomal subunit protein bL33B.